We begin with the raw amino-acid sequence, 281 residues long: NAD kinase (281 aa).

Aspartate 61 serves as the catalytic Proton acceptor. NAD(+) contacts are provided by residues 61-62 (DG), 134-135 (ND), arginine 145, aspartate 164, 175-180 (TAYSLS), and glutamine 234.

This sequence belongs to the NAD kinase family. Requires a divalent metal cation as cofactor.

It localises to the cytoplasm. The catalysed reaction is NAD(+) + ATP = ADP + NADP(+) + H(+). In terms of biological role, involved in the regulation of the intracellular balance of NAD and NADP, and is a key enzyme in the biosynthesis of NADP. Catalyzes specifically the phosphorylation on 2'-hydroxyl of the adenosine moiety of NAD to yield NADP. The polypeptide is NAD kinase (Clostridium botulinum (strain ATCC 19397 / Type A)).